A 164-amino-acid chain; its full sequence is Transcription elongation factor GreA (164 aa).

A coiled-coil region spans residues 50–76 (YHAAREEQGQQEARIRQLQDLLSNAKV).

The protein belongs to the GreA/GreB family.

Necessary for efficient RNA polymerase transcription elongation past template-encoded arresting sites. The arresting sites in DNA have the property of trapping a certain fraction of elongating RNA polymerases that pass through, resulting in locked ternary complexes. Cleavage of the nascent transcript by cleavage factors such as GreA or GreB allows the resumption of elongation from the new 3'terminus. GreA releases sequences of 2 to 3 nucleotides. The polypeptide is Transcription elongation factor GreA (Mycobacterium bovis (strain ATCC BAA-935 / AF2122/97)).